The chain runs to 879 residues: Phosphoenolpyruvate carboxylase (879 aa).

Residues H138 and K546 contribute to the active site.

It belongs to the PEPCase type 1 family. Requires Mg(2+) as cofactor.

The enzyme catalyses oxaloacetate + phosphate = phosphoenolpyruvate + hydrogencarbonate. In terms of biological role, forms oxaloacetate, a four-carbon dicarboxylic acid source for the tricarboxylic acid cycle. In Pectobacterium atrosepticum (strain SCRI 1043 / ATCC BAA-672) (Erwinia carotovora subsp. atroseptica), this protein is Phosphoenolpyruvate carboxylase.